A 267-amino-acid chain; its full sequence is Malonyl-[acyl-carrier protein] O-methyltransferase (267 aa).

This sequence belongs to the methyltransferase superfamily.

It catalyses the reaction malonyl-[ACP] + S-adenosyl-L-methionine = malonyl-[ACP] methyl ester + S-adenosyl-L-homocysteine. Its pathway is cofactor biosynthesis; biotin biosynthesis. Functionally, converts the free carboxyl group of a malonyl-thioester to its methyl ester by transfer of a methyl group from S-adenosyl-L-methionine (SAM). It allows to synthesize pimeloyl-ACP via the fatty acid synthetic pathway. This Geobacter sulfurreducens (strain ATCC 51573 / DSM 12127 / PCA) protein is Malonyl-[acyl-carrier protein] O-methyltransferase.